A 639-amino-acid polypeptide reads, in one-letter code: Tubulin--tyrosine ligase-like protein 12 (639 aa).

One can recognise a TTL domain in the interval 295-639 (PQGHVFRVHC…TDNCHVTRII (345 aa)). ATP is bound by residues 445 to 448 (SKYI), Lys463, and Asp465.

Belongs to the tubulin--tyrosine ligase family. Interacts with MAVS; the interaction prevents MAVS binding to TBK1 and IKBKE. Interacts (via N-terminus) with TBK1 (via protein kinase domain). Interacts (via TTL domain) with IKBKE (via protein kinase domain). Interacts with tubulin alpha. Interacts with histone H3 and histone H4 (when trimethylated at 'Lys-20' (H4K20me3)). Interacts with CBX3. As to expression, widely expressed with highest levels in brain, kidney, liver, lung, muscle and testis.

The protein resides in the cytoplasm. It is found in the midbody. Its subcellular location is the cytoskeleton. The protein localises to the microtubule organizing center. It localises to the centrosome. The protein resides in the spindle. It is found in the nucleus. In terms of biological role, negatively regulates post-translational modifications of tubulin, including detyrosination of the C-terminus and polyglutamylation of glutamate residues. Also, indirectly promotes histone H4 trimethylation at 'Lys-20' (H4K20me3). Probably by controlling tubulin and/or histone H4 post-translational modifications, plays a role in mitosis and in maintaining chromosome number stability. During RNA virus-mediated infection, acts as a negative regulator of the RIG-I pathway by preventing MAVS binding to TBK1 and IKBKE. In Mus musculus (Mouse), this protein is Tubulin--tyrosine ligase-like protein 12.